A 644-amino-acid chain; its full sequence is MVCSITLLKVRSKRHLLSYLGVVGVGIAGLCIYRSVWGSRPFLERLARADSLIAQERKGAALRGLARMVGHARESSQYLSIAKRQMELSASAAALRTLQRGIRRSADDGRLAALVIHLLLREARFEEAISYVPRVVHKGYESIGAEALIKAALIGSRTGGDSPSRGSFHSERAEHVPEEPVEFSQVQGGRDQAHVTAFPLDRGEEQFRVEPSPPIRHTTGIALARIAPALWLAAFGVTGMHAFLQNAACAYARVGELHAAFRLYSRILGTEAPENTAFWATVAYDAGQFSLVFELLPISLARADLFGTYSAASTHARTHLLLAADAAFDGGDRARARAFWYAYVDRFPGTSTHALYNLALTAPHAQERVRMLAQCVEGDKTYYPAVACYARESIAFRAAHRQRDSVTELLSERGVYSVQMEQEHFLSPHFPVEARSLLAELAQEAMHGRADVRFALEYFRFCYPAQKRLQGSRGALWQLLEVFPVDTQVRRYARWFFFRIGEYESAFGLSDAGGGPEDAFYRALAAASRTGRVESILGGLVEATRAVEARSAAFANIAIVLERMGKKTAAAEHFVLAADEATRESVRQLQKEAGEGEAEEHPRARPAAGKAQRWREWYQRAGQLLQQQGKTVAARALLQRAQAR.

Residues leucine 16–glycine 38 traverse the membrane as a helical segment. Positions valine 586–arginine 603 are enriched in basic and acidic residues. Residues valine 586–arginine 613 form a disordered region.

It localises to the membrane. This is an uncharacterized protein from Treponema pallidum (strain Nichols).